The following is a 308-amino-acid chain: Vacuolar lysine transporter YPQ1 (308 aa).

At 1–12 (MQLVPLELNRST) the chain is on the vacuolar side. Residue N9 is glycosylated (N-linked (GlcNAc...) asparagine). A PQ-loop 1 domain is found at 10-76 (RSTLSGISGS…QHLLSTMIIL (67 aa)). A helical membrane pass occupies residues 13–33 (LSGISGSISISCWIIVFVPQI). At 34 to 44 (YENFYRKSSDG) the chain is on the cytoplasmic side. Residues 45–65 (LSLLFVVLWLAGDVFNLMGAV) traverse the membrane as a helical segment. Residues 66–68 (MQH) are Vacuolar-facing. A helical membrane pass occupies residues 69–89 (LLSTMIILAAYYTVADIILLG). The Cytoplasmic portion of the chain corresponds to 90 to 167 (QCLWYDNEEK…EVNSRNLIKD (78 aa)). Residues 168 to 188 (IFIVSGVVFVGFISWYVTYCV) form a helical membrane-spanning segment. Residue N189 is glycosylated (N-linked (GlcNAc...) asparagine). Residues 189–205 (NYTQPPPVEDPSLPVPE) are Vacuolar-facing. Residues 206-226 (LQINWMAQIFGYLSALLYLGS) form a helical membrane-spanning segment. The PQ-loop 2 domain maps to 211-274 (MAQIFGYLSA…ISLDWKYLIM (64 aa)). At 227-244 (RIPQILLNFKRKSCEGIS) the chain is on the cytoplasmic side. The chain crosses the membrane as a helical span at residues 245–265 (FLFFLFACLGNTTFIFSVIVI). Topologically, residues 266-277 (SLDWKYLIMNAS) are vacuolar. N275 carries N-linked (GlcNAc...) asparagine glycosylation. A helical transmembrane segment spans residues 278 to 298 (WLVGSIGTLFMDFVIFSQFFI). Topologically, residues 299-308 (YKRNKKFILN) are cytoplasmic.

It belongs to the laat-1 family.

It is found in the vacuole membrane. Its function is as follows. Amino acid transporter that moves lysine into the vacuole. May also contribute to low affinity arginine import into the vacuole. Has also been suggested to mediate export of cationic amino acids from the vacuole. May function as an amino acid/proton antiporter. The protein is Vacuolar lysine transporter YPQ1 (YPQ1) of Saccharomyces cerevisiae (strain ATCC 204508 / S288c) (Baker's yeast).